The chain runs to 522 residues: Lysine--tRNA ligase (522 aa).

A 'HIGH' region motif is present at residues 44-52 (PSGLPHIGT). A 'KMSKS' region motif is present at residues 290-294 (KISKS). ATP is bound at residue Lys-293.

This sequence belongs to the class-I aminoacyl-tRNA synthetase family.

The protein resides in the cytoplasm. The catalysed reaction is tRNA(Lys) + L-lysine + ATP = L-lysyl-tRNA(Lys) + AMP + diphosphate. The protein is Lysine--tRNA ligase of Rickettsia rickettsii (strain Iowa).